We begin with the raw amino-acid sequence, 2907 residues long: Fibrillin-2 (2907 aa).

An N-terminal signal peptide occupies residues 1–28 (MGRRRRLCLQPYFVWLGCVALWAQGTDG). The segment at 26 to 58 (TDGQPQPPPPKTLRPQPPPQQVRPAVAGSEGGF) is disordered. The propeptide occupies 29 to 77 (QPQPPPPKTLRPQPPPQQVRPAVAGSEGGFMGPEYRDEGAVAASRVRRR). Residues 30–46 (PQPPPPKTLRPQPPPQQ) show a composition bias toward pro residues. EGF-like domains lie at 111 to 142 (IVPICRNSCGDGFCSRPNMCTCSSGQISPTCG), 145 to 176 (SIQQCSVRCMNGGTCADDHCQCQKGYIGTYCG), and 176 to 208 (GQPVCENGCQNGGRCIGPNRCACVYGFTGPQCE). Disulfide bonds link C115/C124, C119/C130, C132/C141, C149/C159, C153/C164, C166/C175, C180/C190, C184/C196, and C198/C207. Residues 149–359 (CSVRCMNGGT…VTSTDGSRCI (211 aa)) are interaction with MFAP4. The 53-residue stretch at 214–266 (GPCFTQVNNQMCQGQLTGIVCTKTLCCATIGRAWGHPCEMCPAQPQPCRRGFI) folds into the TB 1 domain. Residues 276 to 317 (DVDECQAIPGLCQGGNCINTVGSFECRCPAGHKQSETTQKCE) form the EGF-like 4; calcium-binding domain. 6 disulfide bridges follow: C280-C292, C287-C301, C303-C316, C322-C334, C329-C343, and C345-C358. S298 carries an O-linked (Glc) serine glycan. Residues 318–359 (DIDECSVIPGVCETGDCSNTVGSYFCLCPRGFVTSTDGSRCI) form the EGF-like 5; calcium-binding domain. An O-linked (Glc) serine glycan is attached at S340. The 54-residue stretch at 364-417 (GTCFSGLVNGRCAQELPGRMAKAQCCCEPGRCWSIGTIPEACPVRGSEEYRRLC) folds into the TB 2 domain. N485 carries an N-linked (GlcNAc...) asparagine glycan. One can recognise an EGF-like 6 domain in the interval 487–527 (TIDICKHHANLCLNGRCIPTVSSYRCECNMGYKQDANGDCI). Disulfide bonds link C491-C503, C498-C512, C514-C526, C532-C542, C537-C551, C553-C566, C572-C584, C579-C593, C595-C608, C614-C625, C620-C634, C636-C649, C655-C666, C661-C675, and C677-C690. The O-linked (Glc) serine glycan is linked to S509. An EGF-like 7; calcium-binding domain is found at 528 to 567 (DVDECTSNPCSNGDCVNTPGSYYCKCHAGFQRTPTKQACI). Residue S548 is glycosylated (O-linked (Glc) serine). The region spanning 568 to 609 (DIDECIQNGVLCKNGRCVNTDGSFQCICNAGFELTTDGKNCV) is the EGF-like 8; calcium-binding domain. The O-linked (Glc) serine glycan is linked to S590. In terms of domain architecture, EGF-like 9; calcium-binding spans 610-650 (DHDECTTTNMCLNGMCINEDGSFKCVCKPGFILAPNGRYCT). An O-linked (Glc) serine glycan is attached at S631. One can recognise an EGF-like 10; calcium-binding domain in the interval 651–691 (DVDECQTPGICMNGHCINNEGSFRCDCPPGLAVGVDGRVCV). Residue S672 is glycosylated (O-linked (Glc) serine). The TB 3 domain maps to 697 to 749 (STCYGEIKKGVCVRPFPGAVTKSECCCANPDYGFGEPCQPCPAKNSAEFHGLC). The EGF-like 11; calcium-binding domain maps to 761-802 (DINECALDPDICANGICENLRGSYRCNCNSGYEPDASGRNCI). Disulfide bonds link C765–C777, C772–C786, C788–C801, C807–C819, C814–C828, C830–C843, C849–C859, C854–C868, and C870–C883. The EGF-like 12; calcium-binding domain occupies 803-844 (DIDECLVNRLLCDNGLCRNTPGSYSCTCPPGYVFRTETETCE). O-linked (Glc) serine glycosylation is present at S825. An EGF-like 13; calcium-binding domain is found at 845-883 (DVNECESNPCVNGACRNNLGSFHCECSPGSKLSSTGLIC). An O-linked (Glc) serine glycan is attached at S865. Residues 889 to 940 (GTCWLNIQDNRCEVNINGATLKSECCATLGAAWGSPCERCELDAACPRGFAR) form the TB 4 domain. The 42-residue stretch at 948–989 (DVNECEVFPGVCPNGRCVNSKGSFHCECPEGLTLDGTGRVCL) folds into the EGF-like 14; calcium-binding domain. Intrachain disulfides connect C952/C964, C959/C973, and C975/C988. An O-linked (Glc) serine glycan is attached at S970. In terms of domain architecture, TB 5 spans 994–1045 (EHCFLKWDEDECIHPVPGKFRMDACCCAVGAAWGTECEECPKPGTKEYETLC). Positions 1066–1107 (DINECKAFPGMCTYGKCRNTIGSFKCRCNNGFALDMEERNCT) constitute an EGF-like 15; calcium-binding domain. Disulfide bonds link C1070/C1082, C1077/C1091, C1093/C1106, C1112/C1124, C1119/C1133, C1135/C1149, C1155/C1167, C1162/C1176, C1178/C1191, C1197/C1209, C1204/C1218, C1220/C1233, C1239/C1250, C1246/C1259, C1261/C1274, C1280/C1292, C1287/C1301, C1303/C1316, C1322/C1334, C1329/C1343, C1345/C1358, C1364/C1377, C1371/C1386, C1388/C1399, C1405/C1418, C1412/C1427, C1429/C1440, C1446/C1458, C1453/C1467, C1469/C1482, C1488/C1499, C1494/C1508, C1510/C1523, C1529/C1540, C1535/C1549, and C1551/C1564. S1088 is a glycosylation site (O-linked (Glc) serine). N1105 is a glycosylation site (N-linked (GlcNAc...) asparagine). The EGF-like 16; calcium-binding domain maps to 1108 to 1150 (DIDECRISPDLCGSGICVNTPGSFECECFEGYESGFMMMKNCM). Residues 1151-1192 (DIDECERNPLLCRGGTCVNTEGSFQCDCPLGHELSPSREDCV) form the EGF-like 17; calcium-binding domain. Residue S1173 is glycosylated (O-linked (Glc) serine). The EGF-like 18; calcium-binding domain occupies 1193-1234 (DINECSLSDNLCRNGKCVNMIGTYQCSCNPGYQATPDRQGCT). T1215 carries O-linked (Glc) threonine glycosylation. The region spanning 1235–1275 (DIDECMIMNGGCDTQCTNSEGSYECSCSEGYALMPDGRSCA) is the EGF-like 19; calcium-binding domain. Residue S1256 is glycosylated (O-linked (Glc) serine). The EGF-like 20; calcium-binding domain maps to 1276–1317 (DIDECENNPDICDGGQCTNIPGEYRCLCYDGFMASMDMKTCI). Residues 1318–1359 (DVNECDLNPNICMFGECENTKGSFICHCQLGYSVKKGTTGCT) enclose the EGF-like 21; calcium-binding domain. An O-linked (Glc) serine glycan is attached at S1340. In terms of domain architecture, EGF-like 22; calcium-binding spans 1360-1400 (DVDECEIGAHNCDMHASCLNVPGSFKCSCREGWVGNGIKCI). A glycan (O-linked (Glc) serine) is linked at S1383. Residues 1401-1441 (DLDECANGTHQCSINAQCVNTPGSYRCACSEGFTGDGFTCS) enclose the EGF-like 23; calcium-binding domain. An N-linked (GlcNAc...) asparagine glycan is attached at N1407. Positions 1442–1483 (DVDECAENTNLCENGQCLNVPGAYRCECEMGFTPASDSRSCQ) constitute an EGF-like 24; calcium-binding domain. Residues 1484-1524 (DIDECSFQNICVFGTCNNLPGMFHCICDDGYELDRTGGNCT) form the EGF-like 25; calcium-binding domain. N1522 carries N-linked (GlcNAc...) asparagine glycosylation. The EGF-like 26; calcium-binding domain occupies 1525–1565 (DIDECADPINCVNGLCVNTPGRYECNCPPDFQLNPTGVGCV). The TB 6 domain occupies 1570–1626 (GNCYLKFGPRGDGSLSCNTEVGVGVSRSSCCCSLGKAWGNPCETCPPVNSTEYYTLC). N1618 carries an N-linked (GlcNAc...) asparagine glycan. Residues 1643-1684 (DIDECQELPGLCQGGNCINTFGSFQCECPQGYYLSEETRICE) enclose the EGF-like 27; calcium-binding domain. 6 disulfides stabilise this stretch: C1647-C1659, C1654-C1668, C1670-C1683, C1689-C1701, C1696-C1710, and C1712-C1725. S1665 is a glycosylation site (O-linked (Glc) serine). Positions 1685 to 1726 (DIDECFAHPGVCGPGTCYNTLGNYTCICPPEYMQVNGGHNCM) constitute an EGF-like 28; calcium-binding domain. A glycan (N-linked (GlcNAc...) asparagine) is linked at N1707. The interval 1728 to 2164 (MRKSFCYRSY…VPSLHDTRED (437 aa)) is interaction with MFAP4. Residues 1731–1784 (SFCYRSYNGTTCENELPFNVTKRMCCCTYNVGKAWNKPCEPCPTPGTADFKTIC) form the TB 7 domain. N-linked (GlcNAc...) asparagine glycosylation is found at N1738 and N1749. In terms of domain architecture, EGF-like 29; calcium-binding spans 1801–1842 (DIDECKEIPGICANGVCINQIGSFRCECPTGFSYNDLLLVCE). 21 disulfides stabilise this stretch: C1805–C1817, C1812–C1826, C1828–C1841, C1847–C1860, C1854–C1869, C1871–C1883, C1889–C1901, C1896–C1910, C1912–C1925, C1931–C1941, C1936–C1950, C1952–C1964, C1970–C1983, C1978–C1992, C1994–C2007, C2013–C2025, C2020–C2034, C2036–C2047, C2053–C2065, C2060–C2074, and C2076–C2089. An EGF-like 30; calcium-binding domain is found at 1843 to 1884 (DIDECSNGDNLCQRNADCINSPGSYRCECAAGFKLSPNGACV). S1866 is a glycosylation site (O-linked (Glc) serine). One can recognise an EGF-like 31; calcium-binding domain in the interval 1885 to 1926 (DRNECLEIPNVCSHGLCVDLQGSYQCICNNGFKASQDQTMCM). One can recognise an EGF-like 32; calcium-binding domain in the interval 1927-1965 (DVDECERHPCGNGTCKNTVGSYNCLCYPGFELTHNNDCL). N1938 is a glycosylation site (N-linked (GlcNAc...) asparagine). A glycan (O-linked (Glc) serine) is linked at S1947. The EGF-like 33; calcium-binding domain occupies 1966-2008 (DIDECSSFFGQVCRNGRCFNEIGSFKCLCNEGYELTPDGKNCI). S1989 carries O-linked (Glc) serine glycosylation. In terms of domain architecture, EGF-like 34; calcium-binding spans 2009-2048 (DTNECVALPGSCSPGTCQNLEGSFRCICPPGYEVRSENCI). The EGF-like 35; calcium-binding domain maps to 2049 to 2090 (DINECDEDPNICLFGSCTNTPGGFQCICPPGFVLSDNGRRCF). One can recognise a TB 8 domain in the interval 2095–2148 (SFCFTNFENGKCSVPKAFNTTKAKCCCSKMPGEGWGDPCELCPKDDEVAFQDLC). N2113 carries N-linked (GlcNAc...) asparagine glycosylation. Positions 2164-2205 (DVNECLESPGICSNGQCINTDGSFRCECPMGYNLDYTGVRCV) constitute an EGF-like 36; calcium-binding domain. 15 cysteine pairs are disulfide-bonded: C2168–C2180, C2175–C2189, C2191–C2204, C2210–C2221, C2216–C2230, C2232–C2244, C2250–C2261, C2257–C2270, C2272–C2285, C2291–C2305, C2298–C2314, C2316–C2329, C2335–C2347, C2342–C2356, and C2358–C2371. O-linked (Glc) serine glycosylation is present at S2186. The EGF-like 37; calcium-binding domain maps to 2206 to 2245 (DTDECSIGNPCGNGTCTNVIGSFECTCNEGFEPGPMMNCE). N2218 carries an N-linked (GlcNAc...) asparagine glycan. Residues 2246-2286 (DINECAQNPLLCAFRCMNTFGSYECTCPVGYALREDQKMCK) enclose the EGF-like 38; calcium-binding domain. S2267 carries O-linked (Glc) serine glycosylation. An EGF-like 39; calcium-binding domain is found at 2287 to 2330 (DLDECAEGLHDCESRGMMCKNLIGTFMCICPPGMARRPDGEGCV). One can recognise an EGF-like 40; calcium-binding domain in the interval 2331–2372 (DENECRTKPGICENGRCVNIIGSYRCECNEGFQSSSSGTECL). S2353 is a glycosylation site (O-linked (Glc) serine). A TB 9 domain is found at 2377–2430 (GLCFAEVLQTMCQMASSSRNLVTKSECCCDGGRGWGHQCELCPLPGTAQYKKIC). The EGF-like 41; calcium-binding domain maps to 2442–2483 (DIDECKVMPSLCTNGQCVNTMGSFRCFCKVGYTTDISGTACV). Intrachain disulfides connect C2446–C2458, C2453–C2467, C2469–C2482, C2488–C2499, C2495–C2508, C2510–C2523, C2529–C2540, C2536–C2549, C2551–C2562, C2568–C2581, C2575–C2590, C2592–C2605, C2611–C2621, C2617–C2630, C2632–C2645, C2651–C2662, C2657–C2671, C2673–C2686, C2692–C2703, C2699–C2712, and C2714–C2726. O-linked (Glc) serine glycosylation is present at S2464. Residues 2484 to 2524 (DLDECSQSPKPCNFICKNTKGSYQCSCPRGYVLQEDGKTCK) form the EGF-like 42; calcium-binding domain. S2505 is a glycosylation site (O-linked (Glc) serine). One can recognise an EGF-like 43; calcium-binding domain in the interval 2525–2563 (DLDECQTKQHNCQFLCVNTLGGFTCKCPPGFTQHHTACI). Residues 2564–2606 (DNNECGSQPSLCGAKGICQNTPGSFSCECQRGFSLDASGLNCE) form the EGF-like 44; calcium-binding domain. S2587 carries an O-linked (Glc) serine glycan. The EGF-like 45; calcium-binding domain occupies 2607-2646 (DVDECDGNHRCQHGCQNILGGYRCGCPQGYVQHYQWNQCV). In terms of domain architecture, EGF-like 46; calcium-binding spans 2647–2687 (DENECSNPGACGSASCYNTLGSYKCACPSGFSFDQFSSACH). S2668 is a glycosylation site (O-linked (Glc) serine). An EGF-like 47; calcium-binding domain is found at 2688–2727 (DVNECSSSKNPCSYGCSNTEGGYLCGCPPGYFRVGQGHCV). Residue N2803 is glycosylated (N-linked (GlcNAc...) asparagine).

It belongs to the fibrillin family. As to quaternary structure, interacts with BMP2, BMP4, BMP7, BMP10 and GDF5. Interacts with MFAP2 and MFAP5. Interacts with ADAMTSL5. Interacts with MFAP4. N-glycosylated. In terms of processing, O-glycosylated on serine residues by POGLUT2 and POGLUT3. Widely expressed.

It is found in the secreted. The protein localises to the extracellular space. Its subcellular location is the extracellular matrix. Functionally, fibrillins are structural components of 10-12 nm extracellular calcium-binding microfibrils, which occur either in association with elastin or in elastin-free bundles. Fibrillin-2-containing microfibrils regulate the early process of elastic fiber assembly. Regulates osteoblast maturation by controlling TGF-beta bioavailability and calibrating TGF-beta and BMP levels, respectively. Its function is as follows. Hormone secreted by trophoblasts that promotes trophoblast invasiveness. Has glucogenic activity: is able to increase plasma glucose levels. The chain is Fibrillin-2 from Mus musculus (Mouse).